The following is a 645-amino-acid chain: MDVINCEEVKRDEFHTEKYYDSYNIFGAHIVTEDGMRGVRCTVWAPHAKAMSVVGDFNEWDYEQHKMLQVTEEGIWSLFVPHIEENEIYKYAIETMDGDVILKADPYAVYAEVRPNTASVVFDIEGYEWNDKNWIRKRKKKSIYKEAMTVYELHFGSWKKKEDGALYSYREMAEELIPYVVEHQFTHIEIMPLVEHPYDRSWGYQGTGYYAATSRFGTPHDLMYFVDECHKYGIGVILDWVPGHFCKDAHGLYLFDGTPTYEYKDRDVQENLVWGTVNFDLGKREVRNFLISNALFWMKYFHIDGFRVDAVANMLYWNKEGKEQSNEHAVSFLRELNEAVFAEDEEFLMTAEDSTAWPLVTAPTYEGGLGFNYKWNMGWMNDVLKYMECAPEYRKYIHEKMTFSLIYAHSENFILPLSHDEVVHGKKSLLNKMPGDYWDKFAQLRLLYGYFFTHPGKKLLFMGGEFGQFDEWKDLEDLDWNLHDFEMHRNMHDYFKELIALYKRSKPLWQLDHSPEGFQWIDANNNEQSIFSFIRQGDKQEDALVVVCNFTKATYENYKVGVPDFEYYNEILNSDSAQYGGSGQVNKKRLKTILEPYHNQAAHVEITIPPFGVSILRPVKTRKGSKKQDGSKTKVRSNVTSRGKR.

Aspartate 309 functions as the Nucleophile in the catalytic mechanism. Glutamate 352 functions as the Proton donor in the catalytic mechanism. Positions 619–645 (VKTRKGSKKQDGSKTKVRSNVTSRGKR) are disordered. Positions 636–645 (RSNVTSRGKR) are enriched in polar residues.

Belongs to the glycosyl hydrolase 13 family. GlgB subfamily. In terms of assembly, monomer.

It carries out the reaction Transfers a segment of a (1-&gt;4)-alpha-D-glucan chain to a primary hydroxy group in a similar glucan chain.. It participates in glycan biosynthesis; glycogen biosynthesis. Its function is as follows. Catalyzes the formation of the alpha-1,6-glucosidic linkages in glycogen by scission of a 1,4-alpha-linked oligosaccharide from growing alpha-1,4-glucan chains and the subsequent attachment of the oligosaccharide to the alpha-1,6 position. The chain is 1,4-alpha-glucan branching enzyme GlgB from Bacillus mycoides (strain KBAB4) (Bacillus weihenstephanensis).